We begin with the raw amino-acid sequence, 250 residues long: Uracil-DNA glycosylase (250 aa).

Catalysis depends on Asp78, which acts as the Proton acceptor.

Belongs to the uracil-DNA glycosylase (UDG) superfamily. UNG family.

Its subcellular location is the cytoplasm. It carries out the reaction Hydrolyzes single-stranded DNA or mismatched double-stranded DNA and polynucleotides, releasing free uracil.. Functionally, excises uracil residues from the DNA which can arise as a result of misincorporation of dUMP residues by DNA polymerase or due to deamination of cytosine. The chain is Uracil-DNA glycosylase from Albidiferax ferrireducens (strain ATCC BAA-621 / DSM 15236 / T118) (Rhodoferax ferrireducens).